Here is a 398-residue protein sequence, read N- to C-terminus: MRPGGALLALLASLLLLLLLRLLWCPADAPGRARILVEESREATHGTPAALRTLRSPATAVPRATNSTYLNEKSLHLTEKCKNLQYGIESFSNKTKGYSENDYLQIITDIQSCPWKRQAEEYANFRAKLASCCDAVQNFVVSQNNTPVGTNMSYEVESKKEIPIKKNIFHMFPVSQPFVDYPYNQCAVVGNGGILNKSLCGTEIDKSDFVFRCNLPPTTGDVSKDVGSKTNLVTINPSIITLKYGNLKEKKALFLEDIATYGEAFFLLPAFSFRANTGTSFKVYYTLEESKARQKVLFFHPKYLKDLALFWRTKGVTAYRLSTGLMITSVAVELCKNVKLYGFWPFSKTVEDIPVSHHYYDNKLPKHGFHQMPKEYSQILQLHMKGILKLQFSKCEVA.

Over 1–3 (MRP) the chain is Cytoplasmic. Residues 4-24 (GGALLALLASLLLLLLLRLLW) form a helical; Signal-anchor for type II membrane protein membrane-spanning segment. Over 25 to 398 (CPADAPGRAR…KLQFSKCEVA (374 aa)) the chain is Lumenal. N-linked (GlcNAc...) asparagine glycosylation is found at asparagine 66, asparagine 93, asparagine 151, and asparagine 196. Cystine bridges form between cysteine 186–cysteine 335 and cysteine 200–cysteine 395. Residues asparagine 214, 236 to 238 (NPS), and 322 to 324 (STG) each bind substrate. Histidine 370 serves as the catalytic Proton donor/acceptor.

The protein belongs to the glycosyltransferase 29 family.

The protein localises to the golgi apparatus membrane. The enzyme catalyses a ganglioside GM3 + CMP-N-acetyl-beta-neuraminate = a ganglioside GD3 + CMP + H(+). It catalyses the reaction a ganglioside GM3 (d18:1(4E)) + CMP-N-acetyl-beta-neuraminate = a ganglioside GD3 (d18:1(4E)) + CMP + H(+). The catalysed reaction is a ganglioside GD1a (d18:1(4E)) + CMP-N-acetyl-beta-neuraminate = a ganglioside GT1a (d18:1(4E)) + CMP + H(+). It carries out the reaction a ganglioside GD1a + CMP-N-acetyl-beta-neuraminate = a ganglioside GT1a + CMP + H(+). The enzyme catalyses a ganglioside GM1b (d18:1(4E)) + CMP-N-acetyl-beta-neuraminate = a ganglioside GD1c (d18:1(4E)) + CMP + H(+). It catalyses the reaction a ganglioside GM1b + CMP-N-acetyl-beta-neuraminate = a ganglioside GD1c + CMP + H(+). The catalysed reaction is a ganglioside GM4 (d18:1(4E)) + CMP-N-acetyl-beta-neuraminate = an N-acetyl-alpha-neuraminosyl-(2-&gt;8)-N-acetyl-alpha-neuraminosyl-(2-&gt;3)-beta-D-galactosyl-(1&lt;-&gt;1')-N-acylsphing-4-enine + CMP + H(+). It carries out the reaction N-acetyl-alpha-neuraminosyl-(2-&gt;3)-beta-D-galactosyl-(1&lt;-&gt;1')-ceramide + CMP-N-acetyl-beta-neuraminate = N-acetyl-alpha-neuraminosyl-(2-&gt;8)-N-acetyl-alpha-neuraminosyl-(2-&gt;3)-beta-D-galactosyl-(1&lt;-&gt;1')-ceramide + CMP + H(+). The enzyme catalyses a ganglioside GT1b (d18:1(4E)) + CMP-N-acetyl-beta-neuraminate = a ganglioside GQ1b (d18:1(4E)) + CMP + H(+). It catalyses the reaction a ganglioside GT1b + CMP-N-acetyl-beta-neuraminate = a ganglioside GQ1b + CMP + H(+). Its pathway is protein modification; protein glycosylation. Functionally, alpha-2,8-sialyltransferase that prefers O-glycans to N-glycans or glycolipids as acceptor substrates. The minimal acceptor substrate is the NeuAc-alpha-2,3(6)-Gal sequence at the non-reducing end of their carbohydrate groups. This chain is Alpha-2,8-sialyltransferase 8F (ST8SIA6), found in Pan troglodytes (Chimpanzee).